We begin with the raw amino-acid sequence, 261 residues long: Malonyl-[acyl-carrier protein] O-methyltransferase (261 aa).

It belongs to the methyltransferase superfamily.

It carries out the reaction malonyl-[ACP] + S-adenosyl-L-methionine = malonyl-[ACP] methyl ester + S-adenosyl-L-homocysteine. It functions in the pathway cofactor biosynthesis; biotin biosynthesis. Its function is as follows. Converts the free carboxyl group of a malonyl-thioester to its methyl ester by transfer of a methyl group from S-adenosyl-L-methionine (SAM). It allows to synthesize pimeloyl-ACP via the fatty acid synthetic pathway. The sequence is that of Malonyl-[acyl-carrier protein] O-methyltransferase from Bacteroides thetaiotaomicron (strain ATCC 29148 / DSM 2079 / JCM 5827 / CCUG 10774 / NCTC 10582 / VPI-5482 / E50).